Here is a 1128-residue protein sequence, read N- to C-terminus: Major DNA-binding protein (1128 aa).

A required for nuclear localization region spans residues 1104-1128 (LGGGGQGSGGRRKRRLATVLPGLEV).

This sequence belongs to the herpesviridae major DNA-binding protein family. Homooligomers. Forms double-helical filaments necessary for the formation of replication compartments within the host nucleus. Interacts with the origin-binding protein. Interacts with the helicase primase complex; this interaction stimulates primer synthesis activity of the helicase-primase complex. Interacts with the DNA polymerase. Interacts with the alkaline exonuclease; this interaction increases its nuclease processivity.

Its subcellular location is the virion tegument. The protein localises to the host nucleus. Plays several crucial roles in viral infection. Participates in the opening of the viral DNA origin to initiate replication by interacting with the origin-binding protein. May disrupt loops, hairpins and other secondary structures present on ssDNA to reduce and eliminate pausing of viral DNA polymerase at specific sites during elongation. Promotes viral DNA recombination by performing strand-transfer, characterized by the ability to transfer a DNA strand from a linear duplex to a complementary single-stranded DNA circle. Can also catalyze the renaturation of complementary single strands. Additionally, reorganizes the host cell nucleus, leading to the formation of prereplicative sites and replication compartments. This process is driven by the protein which can form double-helical filaments in the absence of DNA. This Homo sapiens (Human) protein is Major DNA-binding protein.